The following is a 155-amino-acid chain: Transcriptional regulator MraZ (155 aa).

SpoVT-AbrB domains are found at residues 7–54 (TYEC…PMEE) and 83–126 (VKTV…DKDK).

Belongs to the MraZ family. Forms oligomers.

It localises to the cytoplasm. Its subcellular location is the nucleoid. The chain is Transcriptional regulator MraZ from Christiangramia forsetii (strain DSM 17595 / CGMCC 1.15422 / KT0803) (Gramella forsetii).